We begin with the raw amino-acid sequence, 532 residues long: 56 kDa type-specific antigen (532 aa).

An N-terminal signal peptide occupies residues 1 to 22 (MKKIMLIASAMSALSLPFSASA). A helical membrane pass occupies residues 67-87 (TNGLPFGGTLAAGMTIAPGFR). The interval 401 to 428 (QEEDAKNQGEGDCKQQQGTSEKSKKGKD) is disordered. Residues 403 to 413 (EDAKNQGEGDC) show a composition bias toward basic and acidic residues. Residues 480 to 500 (TGMVASGALGVAINAAEGVYV) traverse the membrane as a helical segment.

It is found in the cell membrane. Its function is as follows. May be an adherent factor for rickettsial adsorption to the host-cell surface and a determinant of virulence of individual rickettsial strain. It is the major outer membrane protein. The polypeptide is 56 kDa type-specific antigen (Orientia tsutsugamushi (Rickettsia tsutsugamushi)).